The chain runs to 312 residues: Ornithine carbamoyltransferase (312 aa).

Carbamoyl phosphate-binding positions include 57-60 (STRT), Q84, R108, and 135-138 (HPCQ). Residues N166, D226, and 230–231 (SM) contribute to the L-ornithine site. Residues 265-266 (CL) and R293 contribute to the carbamoyl phosphate site.

The protein belongs to the aspartate/ornithine carbamoyltransferase superfamily. OTCase family.

The protein localises to the cytoplasm. The catalysed reaction is carbamoyl phosphate + L-ornithine = L-citrulline + phosphate + H(+). It participates in amino-acid degradation; L-arginine degradation via ADI pathway; carbamoyl phosphate from L-arginine: step 2/2. Reversibly catalyzes the transfer of the carbamoyl group from carbamoyl phosphate (CP) to the N(epsilon) atom of ornithine (ORN) to produce L-citrulline. The chain is Ornithine carbamoyltransferase from Brucella abortus (strain 2308).